A 242-amino-acid polypeptide reads, in one-letter code: tRNA (guanine-N(1)-)-methyltransferase (242 aa).

S-adenosyl-L-methionine is bound by residues glycine 112 and leucine 131 to leucine 136.

This sequence belongs to the RNA methyltransferase TrmD family. In terms of assembly, homodimer.

It localises to the cytoplasm. It carries out the reaction guanosine(37) in tRNA + S-adenosyl-L-methionine = N(1)-methylguanosine(37) in tRNA + S-adenosyl-L-homocysteine + H(+). Specifically methylates guanosine-37 in various tRNAs. The polypeptide is tRNA (guanine-N(1)-)-methyltransferase (Crocosphaera subtropica (strain ATCC 51142 / BH68) (Cyanothece sp. (strain ATCC 51142))).